The primary structure comprises 176 residues: Ribosome maturation factor RimM (176 aa).

One can recognise a PRC barrel domain in the interval 97 to 176 (DSEFYHRDLI…QILVDWDPDF (80 aa)).

The protein belongs to the RimM family. In terms of assembly, binds ribosomal protein uS19.

It is found in the cytoplasm. Its function is as follows. An accessory protein needed during the final step in the assembly of 30S ribosomal subunit, possibly for assembly of the head region. Essential for efficient processing of 16S rRNA. May be needed both before and after RbfA during the maturation of 16S rRNA. It has affinity for free ribosomal 30S subunits but not for 70S ribosomes. This is Ribosome maturation factor RimM from Shewanella frigidimarina (strain NCIMB 400).